The primary structure comprises 186 residues: Peptidyl-tRNA hydrolase (186 aa).

A tRNA-binding site is contributed by Y14. The Proton acceptor role is filled by H19. Residues Y61, N63, and N107 each contribute to the tRNA site.

The protein belongs to the PTH family. In terms of assembly, monomer.

The protein resides in the cytoplasm. It carries out the reaction an N-acyl-L-alpha-aminoacyl-tRNA + H2O = an N-acyl-L-amino acid + a tRNA + H(+). Hydrolyzes ribosome-free peptidyl-tRNAs (with 1 or more amino acids incorporated), which drop off the ribosome during protein synthesis, or as a result of ribosome stalling. Its function is as follows. Catalyzes the release of premature peptidyl moieties from peptidyl-tRNA molecules trapped in stalled 50S ribosomal subunits, and thus maintains levels of free tRNAs and 50S ribosomes. This is Peptidyl-tRNA hydrolase from Helicobacter pylori (strain J99 / ATCC 700824) (Campylobacter pylori J99).